Here is a 122-residue protein sequence, read N- to C-terminus: Large ribosomal subunit protein uL14 (122 aa).

Belongs to the universal ribosomal protein uL14 family. As to quaternary structure, part of the 50S ribosomal subunit. Forms a cluster with proteins L3 and L19. In the 70S ribosome, L14 and L19 interact and together make contacts with the 16S rRNA in bridges B5 and B8.

In terms of biological role, binds to 23S rRNA. Forms part of two intersubunit bridges in the 70S ribosome. The sequence is that of Large ribosomal subunit protein uL14 from Oenococcus oeni (strain ATCC BAA-331 / PSU-1).